A 32-amino-acid chain; its full sequence is Cytochrome b6-f complex subunit 7 (32 aa).

Residues 9 to 27 (AAVFWVLIPVGLLGGVLLL) traverse the membrane as a helical segment.

It belongs to the PetM family. In terms of assembly, the 4 large subunits of the cytochrome b6-f complex are cytochrome b6, subunit IV (17 kDa polypeptide, PetD), cytochrome f and the Rieske protein, while the 4 small subunits are PetG, PetL, PetM and PetN. The complex functions as a dimer.

Its subcellular location is the cellular thylakoid membrane. Component of the cytochrome b6-f complex, which mediates electron transfer between photosystem II (PSII) and photosystem I (PSI), cyclic electron flow around PSI, and state transitions. In Prochlorococcus marinus (strain NATL1A), this protein is Cytochrome b6-f complex subunit 7.